Reading from the N-terminus, the 573-residue chain is Adenine deaminase (573 aa).

This sequence belongs to the metallo-dependent hydrolases superfamily. Adenine deaminase family. Requires Mn(2+) as cofactor.

It carries out the reaction adenine + H2O + H(+) = hypoxanthine + NH4(+). The protein is Adenine deaminase of Bacillus licheniformis (strain ATCC 14580 / DSM 13 / JCM 2505 / CCUG 7422 / NBRC 12200 / NCIMB 9375 / NCTC 10341 / NRRL NRS-1264 / Gibson 46).